The following is a 202-amino-acid chain: Na(+)-translocating NADH-quinone reductase subunit E (202 aa).

Helical transmembrane passes span 11–31 (SIFM…FLAV), 41–61 (LGVA…IIYF), 81–101 (FLGF…LEMV), 114–134 (GIYL…LFMV), 144–164 (LVYG…LAGI), and 180–200 (LGIT…FSGI).

Belongs to the NqrDE/RnfAE family. Composed of six subunits; NqrA, NqrB, NqrC, NqrD, NqrE and NqrF.

Its subcellular location is the cell inner membrane. The enzyme catalyses a ubiquinone + n Na(+)(in) + NADH + H(+) = a ubiquinol + n Na(+)(out) + NAD(+). NQR complex catalyzes the reduction of ubiquinone-1 to ubiquinol by two successive reactions, coupled with the transport of Na(+) ions from the cytoplasm to the periplasm. NqrA to NqrE are probably involved in the second step, the conversion of ubisemiquinone to ubiquinol. The protein is Na(+)-translocating NADH-quinone reductase subunit E of Psychromonas ingrahamii (strain DSM 17664 / CCUG 51855 / 37).